The primary structure comprises 189 residues: Peptidyl-tRNA hydrolase (189 aa).

Residue Y15 coordinates tRNA. H20 serves as the catalytic Proton acceptor. The tRNA site is built by Y67, N69, and N115.

The protein belongs to the PTH family. Monomer.

The protein resides in the cytoplasm. It carries out the reaction an N-acyl-L-alpha-aminoacyl-tRNA + H2O = an N-acyl-L-amino acid + a tRNA + H(+). In terms of biological role, hydrolyzes ribosome-free peptidyl-tRNAs (with 1 or more amino acids incorporated), which drop off the ribosome during protein synthesis, or as a result of ribosome stalling. Catalyzes the release of premature peptidyl moieties from peptidyl-tRNA molecules trapped in stalled 50S ribosomal subunits, and thus maintains levels of free tRNAs and 50S ribosomes. The sequence is that of Peptidyl-tRNA hydrolase from Symbiobacterium thermophilum (strain DSM 24528 / JCM 14929 / IAM 14863 / T).